We begin with the raw amino-acid sequence, 60 residues long: MGVPRRAKLYEVKDGKVERKNPFCPRCGPGVFMADHGNRYACGRCGYTEFKDQPEPKKKK.

Residues Cys-24, Cys-27, Cys-42, and Cys-45 each coordinate Zn(2+). Residues 24-45 form a C4-type zinc finger; it reads CPRCGPGVFMADHGNRYACGRC.

Belongs to the eukaryotic ribosomal protein eS31 family. In terms of assembly, part of the 30S ribosomal subunit. Requires Zn(2+) as cofactor.

This Methanopyrus kandleri (strain AV19 / DSM 6324 / JCM 9639 / NBRC 100938) protein is Small ribosomal subunit protein eS31.